The sequence spans 103 residues: N(4)-acetylcytidine amidohydrolase (103 aa).

The ASCH domain maps to 6–92; it reads TFFERFEPGI…VIQEIYPGLE (87 aa). The active-site Proton acceptor is K20. Residue T23 is the Nucleophile of the active site. The active-site Proton donor is the E73.

The protein belongs to the N(4)-acetylcytidine amidohydrolase family.

It carries out the reaction N(4)-acetylcytidine + H2O = cytidine + acetate + H(+). The enzyme catalyses N(4)-acetyl-2'-deoxycytidine + H2O = 2'-deoxycytidine + acetate + H(+). It catalyses the reaction N(4)-acetylcytosine + H2O = cytosine + acetate + H(+). Catalyzes the hydrolysis of N(4)-acetylcytidine (ac4C). The polypeptide is N(4)-acetylcytidine amidohydrolase (Shewanella sp. (strain MR-7)).